Consider the following 454-residue polypeptide: Putative KilA-N domain-containing protein L4 (454 aa).

Over residues 1–12 (MPQKTSKSKSSR) the composition is skewed to basic residues. Residues 1–159 (MPQKTSKSKS…DVPEEEYDDN (159 aa)) are disordered. A compositionally biased stretch (basic and acidic residues) spans 14 to 64 (RYIEDSDDETRGRSRNRSIEKSRSRSLDKSQKKSRDKSLTRSRSKSPEKSK). The span at 65–79 (SRSKSLTRSRSKSPK) shows a compositional bias: basic residues. Composition is skewed to acidic residues over residues 98 to 123 (YTTE…DEEL) and 130 to 158 (ESDE…EYDD). A KilA-N domain is found at 172–276 (EFARGKFGDF…LKVSDIVIEY (105 aa)).

This chain is Putative KilA-N domain-containing protein L4, found in Acanthamoeba polyphaga mimivirus (APMV).